The chain runs to 363 residues: UDP-N-acetylglucosamine--N-acetylmuramyl-(pentapeptide) pyrophosphoryl-undecaprenol N-acetylglucosamine transferase (363 aa).

Residues 14 to 16 (TGG), Asn-122, Arg-163, Ser-190, and Gln-285 contribute to the UDP-N-acetyl-alpha-D-glucosamine site.

Belongs to the glycosyltransferase 28 family. MurG subfamily.

It localises to the cell inner membrane. The enzyme catalyses di-trans,octa-cis-undecaprenyl diphospho-N-acetyl-alpha-D-muramoyl-L-alanyl-D-glutamyl-meso-2,6-diaminopimeloyl-D-alanyl-D-alanine + UDP-N-acetyl-alpha-D-glucosamine = di-trans,octa-cis-undecaprenyl diphospho-[N-acetyl-alpha-D-glucosaminyl-(1-&gt;4)]-N-acetyl-alpha-D-muramoyl-L-alanyl-D-glutamyl-meso-2,6-diaminopimeloyl-D-alanyl-D-alanine + UDP + H(+). It functions in the pathway cell wall biogenesis; peptidoglycan biosynthesis. In terms of biological role, cell wall formation. Catalyzes the transfer of a GlcNAc subunit on undecaprenyl-pyrophosphoryl-MurNAc-pentapeptide (lipid intermediate I) to form undecaprenyl-pyrophosphoryl-MurNAc-(pentapeptide)GlcNAc (lipid intermediate II). The polypeptide is UDP-N-acetylglucosamine--N-acetylmuramyl-(pentapeptide) pyrophosphoryl-undecaprenol N-acetylglucosamine transferase (Prochlorococcus marinus (strain MIT 9301)).